The chain runs to 336 residues: D-erythrose-4-phosphate dehydrogenase (336 aa).

11–12 is a binding site for NAD(+); that stretch reads RI. Residues 153-155, R199, 212-213, and R235 contribute to the substrate site; these read SCT and TK. C154 serves as the catalytic Nucleophile. NAD(+) is bound at residue N317.

It belongs to the glyceraldehyde-3-phosphate dehydrogenase family. Epd subfamily. As to quaternary structure, homotetramer.

It localises to the cytoplasm. It catalyses the reaction D-erythrose 4-phosphate + NAD(+) + H2O = 4-phospho-D-erythronate + NADH + 2 H(+). It functions in the pathway cofactor biosynthesis; pyridoxine 5'-phosphate biosynthesis; pyridoxine 5'-phosphate from D-erythrose 4-phosphate: step 1/5. Its function is as follows. Catalyzes the NAD-dependent conversion of D-erythrose 4-phosphate to 4-phosphoerythronate. This Aeromonas salmonicida (strain A449) protein is D-erythrose-4-phosphate dehydrogenase.